Consider the following 679-residue polypeptide: Glutamine-dependent NAD(+) synthetase (679 aa).

The region spanning 12–276 is the CN hydrolase domain; sequence VRVAACTHHT…VRRSVADVDT (265 aa). The active-site Proton acceptor; for glutaminase activity is Glu-52. Lys-121 acts as the For glutaminase activity in catalysis. Position 127 (Tyr-127) interacts with L-glutamine. Cys-176 acts as the Nucleophile; for glutaminase activity in catalysis. L-glutamine-binding residues include Ser-203 and Arg-209. The tract at residues 337-679 is ligase; it reads QQDCYEAYNI…DQIDREVPKG (343 aa). 366 to 373 contacts ATP; sequence GVSGGLDS. Residue Asn-456 participates in deamido-NAD(+) binding. Residue Thr-480 coordinates ATP. Deamido-NAD(+) is bound by residues Glu-485, 490–493, and Lys-635; that span reads WSTY. The interval 639-658 is disordered; the sequence is LPNGPKVSHGGALSPRGDWR.

It in the C-terminal section; belongs to the NAD synthetase family.

It carries out the reaction deamido-NAD(+) + L-glutamine + ATP + H2O = L-glutamate + AMP + diphosphate + NAD(+) + H(+). Its pathway is cofactor biosynthesis; NAD(+) biosynthesis; NAD(+) from deamido-NAD(+) (L-Gln route): step 1/1. Its function is as follows. Catalyzes the ATP-dependent amidation of deamido-NAD to form NAD. Uses L-glutamine as a nitrogen source. The sequence is that of Glutamine-dependent NAD(+) synthetase from Mycobacterium bovis (strain ATCC BAA-935 / AF2122/97).